The primary structure comprises 439 residues: Thymidine phosphorylase (439 aa).

The protein belongs to the thymidine/pyrimidine-nucleoside phosphorylase family. As to quaternary structure, homodimer.

It carries out the reaction thymidine + phosphate = 2-deoxy-alpha-D-ribose 1-phosphate + thymine. Its pathway is pyrimidine metabolism; dTMP biosynthesis via salvage pathway; dTMP from thymine: step 1/2. Its function is as follows. The enzymes which catalyze the reversible phosphorolysis of pyrimidine nucleosides are involved in the degradation of these compounds and in their utilization as carbon and energy sources, or in the rescue of pyrimidine bases for nucleotide synthesis. In Mesorhizobium japonicum (strain LMG 29417 / CECT 9101 / MAFF 303099) (Mesorhizobium loti (strain MAFF 303099)), this protein is Thymidine phosphorylase.